Consider the following 545-residue polypeptide: Cannabidiolic acid synthase-like 2 (545 aa).

The N-terminal stretch at 1-28 is a signal peptide; the sequence is MKCSTFCFWYVCKIIFFFLSFNIQISIA. Cysteine 37 and cysteine 99 are disulfide-bonded. N-linked (GlcNAc...) asparagine glycans are attached at residues asparagine 45, asparagine 65, asparagine 89, and asparagine 168. Residues 77–251 enclose the FAD-binding PCMH-type domain; the sequence is TTPKPLVITT…AAWKIRLVAV (175 aa). The 6-(S-cysteinyl)-8alpha-(pros-histidyl)-FAD (His-Cys) cross-link spans 114–176; sequence HDAEGMSYIS…ENLSFPAGYC (63 aa). Residue histidine 292 participates in substrate binding. Asparagine 297, asparagine 305, asparagine 329, and asparagine 361 each carry an N-linked (GlcNAc...) asparagine glycan. Tyrosine 417 provides a ligand contact to substrate. Asparagine 467 carries N-linked (GlcNAc...) asparagine glycosylation. The Proton acceptor role is filled by tyrosine 484. An N-linked (GlcNAc...) asparagine glycan is attached at asparagine 499.

This sequence belongs to the oxygen-dependent FAD-linked oxidoreductase family. It depends on FAD as a cofactor. The FAD cofactor is bound via a bicovalent 6-S-cysteinyl, 8alpha-N1-histidyl FAD linkage.

The protein localises to the secreted. Functionally, has no cannabidiolic acid synthase activity. This chain is Cannabidiolic acid synthase-like 2 (CBDAS3), found in Cannabis sativa (Hemp).